Here is a 103-residue protein sequence, read N- to C-terminus: Large ribosomal subunit protein bL21 (103 aa).

Belongs to the bacterial ribosomal protein bL21 family. As to quaternary structure, part of the 50S ribosomal subunit. Contacts protein L20.

Its function is as follows. This protein binds to 23S rRNA in the presence of protein L20. This chain is Large ribosomal subunit protein bL21, found in Psychrobacter arcticus (strain DSM 17307 / VKM B-2377 / 273-4).